The following is a 435-amino-acid chain: Pregnancy-specific beta-1-glycoprotein 6 (435 aa).

A signal peptide spans 1–34; the sequence is MGPLSAPPCTQHITWKGLLLTASLLNFWNLPTTA. Residues 35–143 form the Ig-like V-type domain; that stretch reads QVIIEAKPPK…TGYFTVTLYS (109 aa). N-linked (GlcNAc...) asparagine glycosylation is found at asparagine 61, asparagine 103, and asparagine 110. The Cell attachment site motif lies at 126 to 128; sequence RGD. 3 Ig-like C2-type domains span residues 148–233, 241–326, and 334–405; these read PSIS…VTLN, PYIT…VTLN, and PRIY…KEIS. 3 cysteine pairs are disulfide-bonded: cysteine 168/cysteine 216, cysteine 261/cysteine 309, and cysteine 353/cysteine 393. N-linked (GlcNAc...) asparagine glycosylation is found at asparagine 198, asparagine 267, asparagine 302, and asparagine 386.

Belongs to the immunoglobulin superfamily. CEA family.

Its subcellular location is the secreted. This chain is Pregnancy-specific beta-1-glycoprotein 6 (PSG6), found in Homo sapiens (Human).